The sequence spans 360 residues: NADH-quinone oxidoreductase subunit H (360 aa).

8 helical membrane-spanning segments follow: residues 20 to 40 (GMVW…IPLM), 95 to 115 (GLFV…WVVI), 130 to 150 (LLLV…AGWA), 176 to 196 (FCLL…IVLA), 206 to 226 (GIGF…VYLI), 261 to 281 (IFFL…ALMF), 297 to 317 (IPGW…FIWI), and 336 to 356 (IFIP…LSPW).

It belongs to the complex I subunit 1 family. In terms of assembly, NDH-1 is composed of 14 different subunits. Subunits NuoA, H, J, K, L, M, N constitute the membrane sector of the complex.

The protein resides in the cell inner membrane. The enzyme catalyses a quinone + NADH + 5 H(+)(in) = a quinol + NAD(+) + 4 H(+)(out). Functionally, NDH-1 shuttles electrons from NADH, via FMN and iron-sulfur (Fe-S) centers, to quinones in the respiratory chain. The immediate electron acceptor for the enzyme in this species is believed to be ubiquinone. Couples the redox reaction to proton translocation (for every two electrons transferred, four hydrogen ions are translocated across the cytoplasmic membrane), and thus conserves the redox energy in a proton gradient. This subunit may bind ubiquinone. In Verminephrobacter eiseniae (strain EF01-2), this protein is NADH-quinone oxidoreductase subunit H.